The sequence spans 126 residues: Large ribosomal subunit protein bL17 (126 aa).

Belongs to the bacterial ribosomal protein bL17 family. Part of the 50S ribosomal subunit. Contacts protein L32.

The polypeptide is Large ribosomal subunit protein bL17 (Lawsonia intracellularis (strain PHE/MN1-00)).